We begin with the raw amino-acid sequence, 1078 residues long: Carbamoyl phosphate synthase large chain (1078 aa).

The segment at 1 to 401 (MARQPLVSSV…ALQKAVRGLE (401 aa)) is carboxyphosphate synthetic domain. Arg-129, Arg-169, Gly-175, Gly-176, Arg-208, Leu-210, Glu-215, Gly-241, Val-242, His-243, Gln-284, and Glu-298 together coordinate ATP. Residues 133 to 327 (KELLLEIGEP…IARIAAKLAI (195 aa)) form the ATP-grasp 1 domain. Gln-284, Glu-298, and Asn-300 together coordinate Mg(2+). Residues Gln-284, Glu-298, and Asn-300 each coordinate Mn(2+). The tract at residues 402-546 (TDQTDLTWED…YATYEDENEA (145 aa)) is oligomerization domain. The carbamoyl phosphate synthetic domain stretch occupies residues 547-935 (PPLDSPKAVV…ALAKAFLAAG (389 aa)). The ATP-grasp 2 domain occupies 677-867 (ERFLHELGIP…MVDVATQILL (191 aa)). Residues Arg-713, Lys-752, Leu-754, Glu-758, Gly-783, Val-784, His-785, Ser-786, Gln-826, and Glu-838 each contribute to the ATP site. Residues Gln-826, Glu-838, and Asn-840 each coordinate Mg(2+). Residues Gln-826, Glu-838, and Asn-840 each coordinate Mn(2+). An MGS-like domain is found at 936-1078 (LAIERGAPVL…AYRTREAVLA (143 aa)). Residues 936–1078 (LAIERGAPVL…AYRTREAVLA (143 aa)) are allosteric domain.

Belongs to the CarB family. Composed of two chains; the small (or glutamine) chain promotes the hydrolysis of glutamine to ammonia, which is used by the large (or ammonia) chain to synthesize carbamoyl phosphate. Tetramer of heterodimers (alpha,beta)4. Mg(2+) is required as a cofactor. It depends on Mn(2+) as a cofactor.

It catalyses the reaction hydrogencarbonate + L-glutamine + 2 ATP + H2O = carbamoyl phosphate + L-glutamate + 2 ADP + phosphate + 2 H(+). The enzyme catalyses hydrogencarbonate + NH4(+) + 2 ATP = carbamoyl phosphate + 2 ADP + phosphate + 2 H(+). It functions in the pathway amino-acid biosynthesis; L-arginine biosynthesis; carbamoyl phosphate from bicarbonate: step 1/1. The protein operates within pyrimidine metabolism; UMP biosynthesis via de novo pathway; (S)-dihydroorotate from bicarbonate: step 1/3. In terms of biological role, large subunit of the glutamine-dependent carbamoyl phosphate synthetase (CPSase). CPSase catalyzes the formation of carbamoyl phosphate from the ammonia moiety of glutamine, carbonate, and phosphate donated by ATP, constituting the first step of 2 biosynthetic pathways, one leading to arginine and/or urea and the other to pyrimidine nucleotides. The large subunit (synthetase) binds the substrates ammonia (free or transferred from glutamine from the small subunit), hydrogencarbonate and ATP and carries out an ATP-coupled ligase reaction, activating hydrogencarbonate by forming carboxy phosphate which reacts with ammonia to form carbamoyl phosphate. This is Carbamoyl phosphate synthase large chain from Thermomicrobium roseum (strain ATCC 27502 / DSM 5159 / P-2).